The following is a 253-amino-acid chain: NAD(P)H-quinone oxidoreductase subunit K (253 aa).

The [4Fe-4S] cluster site is built by cysteine 68, cysteine 69, cysteine 133, and cysteine 164.

It belongs to the complex I 20 kDa subunit family. As to quaternary structure, NDH-1 can be composed of about 15 different subunits; different subcomplexes with different compositions have been identified which probably have different functions. It depends on [4Fe-4S] cluster as a cofactor.

The protein localises to the cellular thylakoid membrane. It catalyses the reaction a plastoquinone + NADH + (n+1) H(+)(in) = a plastoquinol + NAD(+) + n H(+)(out). The enzyme catalyses a plastoquinone + NADPH + (n+1) H(+)(in) = a plastoquinol + NADP(+) + n H(+)(out). NDH-1 shuttles electrons from an unknown electron donor, via FMN and iron-sulfur (Fe-S) centers, to quinones in the respiratory and/or the photosynthetic chain. The immediate electron acceptor for the enzyme in this species is believed to be plastoquinone. Couples the redox reaction to proton translocation, and thus conserves the redox energy in a proton gradient. Cyanobacterial NDH-1 also plays a role in inorganic carbon-concentration. This Synechococcus sp. (strain CC9311) protein is NAD(P)H-quinone oxidoreductase subunit K.